The sequence spans 263 residues: Palmitoyltransferase ZDHHC22 (263 aa).

Over 1 to 9 the chain is Cytoplasmic; the sequence is MLALRLLNV. The chain crosses the membrane as a helical span at residues 10-30; that stretch reads VAPAYFLCISLVTFVLQLFLF. The Lumenal segment spans residues 31 to 47; it reads LPSMREDPTATPLFSPA. A helical transmembrane segment spans residues 48-68; that stretch reads VLHGALFLFLSANALGNYILV. The Cytoplasmic segment spans residues 69–125; it reads VQNSPDDLGACQGTSSQRPQRPPPSTHFCRVCARVTLRHDHHCFFTGNCIGSRNMRN. A DHHC domain is found at 91-131; it reads PPSTHFCRVCARVTLRHDHHCFFTGNCIGSRNMRNFILFCL. C111 acts as the S-palmitoyl cysteine intermediate in catalysis. Helical transmembrane passes span 126 to 146 and 147 to 167; these read FILF…AGVA and YISA…TLLP. Topologically, residues 168-182 are cytoplasmic; that stretch reads TSISQFFSGAVLGSD. A helical transmembrane segment spans residues 183–203; the sequence is MFVILMLYLWFAVGLACAGFC. Topologically, residues 204 to 263 are lumenal; that stretch reads CHQLLLILRGQTRYQVRKGVAVRARPWRKNLQEVFGKRWLLGLLVPMFNVGTESSKQQDK.

Belongs to the DHHC palmitoyltransferase family. As to quaternary structure, interacts with CNN3.

It localises to the endoplasmic reticulum membrane. Its subcellular location is the golgi apparatus membrane. It catalyses the reaction L-cysteinyl-[protein] + hexadecanoyl-CoA = S-hexadecanoyl-L-cysteinyl-[protein] + CoA. Palmitoyltransferase that could catalyze the addition of palmitate onto various protein substrates and be involved in a variety of cellular processes. Catalyzes the palmitoylation of KCNMA1, regulating localization of KCNMA1 to the plasma membrane. Might also mediate palmitoylation of CNN3. The polypeptide is Palmitoyltransferase ZDHHC22 (Rattus norvegicus (Rat)).